The primary structure comprises 1097 residues: Leukemia inhibitory factor receptor (1097 aa).

The N-terminal stretch at 1–44 (MMNISLRLRRPPWMVDSNGRRMTSHFQWLLLTFILLYLMNQVTS) is a signal peptide. Over 45–833 (EKRGAPRDLK…SMFVVTKENS (789 aa)) the chain is Extracellular. Residues 46 to 131 (KRGAPRDLKC…ISKFTLNEKN (86 aa)) enclose the Fibronectin type-III 1 domain. 2 disulfides stabilise this stretch: cysteine 55/cysteine 65 and cysteine 82/cysteine 90. 6 N-linked (GlcNAc...) asparagine glycosylation sites follow: asparagine 85, asparagine 131, asparagine 143, asparagine 191, asparagine 243, and asparagine 303. Cysteine 213 and cysteine 270 are joined by a disulfide. Fibronectin type-III domains follow at residues 332–434 (PPDI…VYPR), 435–534 (IPTS…TEAI), 538–629 (GPDT…IPND), 627–719 (PNDD…IGYI), and 724–833 (PIVA…KENS). Cysteine 341 and cysteine 351 form a disulfide bridge. N-linked (GlcNAc...) asparagine glycans are attached at residues asparagine 366, asparagine 390, asparagine 407, asparagine 426, asparagine 445, asparagine 471, asparagine 481, and asparagine 489. Cysteine 466 and cysteine 511 are joined by a disulfide. Residues 519 to 523 (WSKWS) carry the WSXWS motif motif. 6 N-linked (GlcNAc...) asparagine glycosylation sites follow: asparagine 572, asparagine 652, asparagine 663, asparagine 680, asparagine 729, and asparagine 787. The helical transmembrane segment at 834 to 854 (VGLIIAILIPVAVAVIVGVVT) threads the bilayer. Residues 855–1097 (SILCYRKREW…TNFFQNKPND (243 aa)) lie on the Cytoplasmic side of the membrane. Positions 869 to 877 (FYPDIPNPE) match the Box 1 motif motif. Serine 927 is subject to Phosphoserine. Disordered stretches follow at residues 982 to 1005 (QPQA…KPQM) and 1022 to 1097 (LDKA…KPND). Composition is skewed to polar residues over residues 1032-1067 (ANVN…NSRQ) and 1086-1097 (SFTNFFQNKPND). Serine 1044 is modified (phosphoserine).

This sequence belongs to the type I cytokine receptor family. Type 2 subfamily. In terms of assembly, heterodimer composed of LIFR and IL6ST. The heterodimer formed by LIFR and IL6ST interacts with the complex formed by CNTF and CNTFR.

Its subcellular location is the cell membrane. Functionally, signal-transducing molecule. May have a common pathway with IL6ST. The soluble form inhibits the biological activity of LIF by blocking its binding to receptors on target cells. In Canis lupus familiaris (Dog), this protein is Leukemia inhibitory factor receptor (LIFR).